Reading from the N-terminus, the 137-residue chain is Small ribosomal subunit protein uS19 (137 aa).

It belongs to the universal ribosomal protein uS19 family.

In terms of biological role, protein S19 forms a complex with S13 that binds strongly to the 16S ribosomal RNA. The protein is Small ribosomal subunit protein uS19 of Methanoculleus marisnigri (strain ATCC 35101 / DSM 1498 / JR1).